The chain runs to 311 residues: Probable manganese-dependent inorganic pyrophosphatase (311 aa).

Positions 9, 13, 15, 75, 97, and 149 each coordinate Mn(2+).

This sequence belongs to the PPase class C family. Requires Mn(2+) as cofactor.

Its subcellular location is the cytoplasm. It carries out the reaction diphosphate + H2O = 2 phosphate + H(+). The chain is Probable manganese-dependent inorganic pyrophosphatase from Lactobacillus johnsonii (strain CNCM I-12250 / La1 / NCC 533).